Here is a 2340-residue protein sequence, read N- to C-terminus: Protein pad-1 (2340 aa).

Disordered regions lie at residues 411 to 458 and 1910 to 1959; these read KLIK…EPSI and TRNS…RRDP. Residues 415 to 432 are compositionally biased toward basic and acidic residues; sequence KRPDSKPPRKPGDREGLH. Positions 437–448 are enriched in polar residues; the sequence is SLHSGVSGNSED. Low complexity predominate over residues 1922 to 1934; it reads GGSITSGSTSTTT.

Belongs to the DOP1 family.

Essential for cell patterning during gastrulation. May be involved in protein traffic between late Golgi and early endosomes. In Caenorhabditis briggsae, this protein is Protein pad-1 (pad-1).